A 268-amino-acid polypeptide reads, in one-letter code: 4-hydroxy-tetrahydrodipicolinate reductase (268 aa).

NAD(+) is bound by residues Gly10–Met15, Asp36, Gly99–Thr101, and Ala123–Met126. The active-site Proton donor/acceptor is the His156. His157 contributes to the (S)-2,3,4,5-tetrahydrodipicolinate binding site. Lys160 serves as the catalytic Proton donor. Residue Gly166–Thr167 coordinates (S)-2,3,4,5-tetrahydrodipicolinate.

It belongs to the DapB family.

The protein resides in the cytoplasm. It carries out the reaction (S)-2,3,4,5-tetrahydrodipicolinate + NAD(+) + H2O = (2S,4S)-4-hydroxy-2,3,4,5-tetrahydrodipicolinate + NADH + H(+). The enzyme catalyses (S)-2,3,4,5-tetrahydrodipicolinate + NADP(+) + H2O = (2S,4S)-4-hydroxy-2,3,4,5-tetrahydrodipicolinate + NADPH + H(+). It participates in amino-acid biosynthesis; L-lysine biosynthesis via DAP pathway; (S)-tetrahydrodipicolinate from L-aspartate: step 4/4. Catalyzes the conversion of 4-hydroxy-tetrahydrodipicolinate (HTPA) to tetrahydrodipicolinate. This chain is 4-hydroxy-tetrahydrodipicolinate reductase, found in Janthinobacterium sp. (strain Marseille) (Minibacterium massiliensis).